The primary structure comprises 232 residues: MQKNAAHTYAISSLLVLSLTGCAWIPSTPLVQGATSAQPVLGPTPVANGSIFQSAQPINYGYQPLFEDRRPRNIGDTLTIVLQENVSASKSSSANASRDGKTNFGFDTVPRYLQGLFGNARADVEASGGNTFNGKGGANASNTFSGTLTVTVDQVLVNGNLHVVGEKQIAINQGTEFIRFSGVVNPRTISGSNTVPSTQVADARIEYVGNGYINEAQNMGWLQRFFLNLSPM.

An N-terminal signal peptide occupies residues 1–21 (MQKNAAHTYAISSLLVLSLTG). C22 carries the N-palmitoyl cysteine lipid modification. Residue C22 is the site of S-diacylglycerol cysteine attachment.

It belongs to the FlgH family. In terms of assembly, the basal body constitutes a major portion of the flagellar organelle and consists of four rings (L,P,S, and M) mounted on a central rod.

It localises to the cell outer membrane. It is found in the bacterial flagellum basal body. In terms of biological role, assembles around the rod to form the L-ring and probably protects the motor/basal body from shearing forces during rotation. The polypeptide is Flagellar L-ring protein (Shigella dysenteriae serotype 1 (strain Sd197)).